Consider the following 123-residue polypeptide: Small ribosomal subunit protein uS12 (123 aa).

Asp89 is subject to 3-methylthioaspartic acid.

It belongs to the universal ribosomal protein uS12 family. In terms of assembly, part of the 30S ribosomal subunit. Contacts proteins S8 and S17. May interact with IF1 in the 30S initiation complex.

Functionally, with S4 and S5 plays an important role in translational accuracy. Its function is as follows. Interacts with and stabilizes bases of the 16S rRNA that are involved in tRNA selection in the A site and with the mRNA backbone. Located at the interface of the 30S and 50S subunits, it traverses the body of the 30S subunit contacting proteins on the other side and probably holding the rRNA structure together. The combined cluster of proteins S8, S12 and S17 appears to hold together the shoulder and platform of the 30S subunit. The chain is Small ribosomal subunit protein uS12 from Methylobacterium radiotolerans (strain ATCC 27329 / DSM 1819 / JCM 2831 / NBRC 15690 / NCIMB 10815 / 0-1).